Consider the following 70-residue polypeptide: Small ribosomal subunit protein bS21A (70 aa).

The protein belongs to the bacterial ribosomal protein bS21 family.

In Paraburkholderia xenovorans (strain LB400), this protein is Small ribosomal subunit protein bS21A.